The chain runs to 106 residues: MSKLHIKKGDIVFVNAGEDKGKTGRVLQVLVKDNRAIVEGINVVSKHTKPNAKNPQGGIEKKEAPIHLSNLNVVDPKSGKATRIGRKLNEKGALVRYSKKSGEEIK.

It belongs to the universal ribosomal protein uL24 family. Part of the 50S ribosomal subunit.

In terms of biological role, one of two assembly initiator proteins, it binds directly to the 5'-end of the 23S rRNA, where it nucleates assembly of the 50S subunit. Its function is as follows. One of the proteins that surrounds the polypeptide exit tunnel on the outside of the subunit. This is Large ribosomal subunit protein uL24 from Parabacteroides distasonis (strain ATCC 8503 / DSM 20701 / CIP 104284 / JCM 5825 / NCTC 11152).